The chain runs to 363 residues: tRNA/tmRNA (uracil-C(5))-methyltransferase (363 aa).

Positions 187, 215, 220, 236, and 296 each coordinate S-adenosyl-L-methionine. Cys-321 (nucleophile) is an active-site residue. The active-site Proton acceptor is the Glu-355.

Belongs to the class I-like SAM-binding methyltransferase superfamily. RNA M5U methyltransferase family. TrmA subfamily.

The catalysed reaction is uridine(54) in tRNA + S-adenosyl-L-methionine = 5-methyluridine(54) in tRNA + S-adenosyl-L-homocysteine + H(+). The enzyme catalyses uridine(341) in tmRNA + S-adenosyl-L-methionine = 5-methyluridine(341) in tmRNA + S-adenosyl-L-homocysteine + H(+). Functionally, dual-specificity methyltransferase that catalyzes the formation of 5-methyluridine at position 54 (m5U54) in all tRNAs, and that of position 341 (m5U341) in tmRNA (transfer-mRNA). The chain is tRNA/tmRNA (uracil-C(5))-methyltransferase from Pseudomonas aeruginosa (strain ATCC 15692 / DSM 22644 / CIP 104116 / JCM 14847 / LMG 12228 / 1C / PRS 101 / PAO1).